A 396-amino-acid polypeptide reads, in one-letter code: 3-amino-4-hydroxybenzoic acid synthase (396 aa).

The disordered stretch occupies residues 1-29 (MSSSPSPSPSSSSSSSASSSASSSPSSSS).

This sequence belongs to the archaeal-type DHQ synthase family. GriH subfamily. Monomer. The cofactor is Mn(2+).

The enzyme catalyses 2-amino-4,5-dihydroxy-6-oxo-7-(phosphooxy)heptanoate = 3-amino-4-hydroxybenzoate + phosphate + 2 H2O + H(+). In terms of biological role, catalyzes the cyclization of 2-amino-4,5-dihydroxy-6-one-heptanoic acid-7-phosphate to yield 3-amino-4-hydroxybenzoic acid (3,4-AHBA). The polypeptide is 3-amino-4-hydroxybenzoic acid synthase (griH) (Streptomyces griseus subsp. griseus (strain JCM 4626 / CBS 651.72 / NBRC 13350 / KCC S-0626 / ISP 5235)).